A 244-amino-acid polypeptide reads, in one-letter code: Venom nerve growth factor (244 aa).

A signal peptide spans 1-18 (MSMLCYTLIIAFLIGIWA). The propeptide occupies 19 to 125 (APKSEDNVSL…SLNRNIRAKR (107 aa)). Disulfide bonds link cysteine 139–cysteine 204, cysteine 182–cysteine 232, and cysteine 192–cysteine 234. An N-linked (GlcNAc...) asparagine glycan is attached at asparagine 148.

The protein belongs to the NGF-beta family. As to quaternary structure, homodimer; non-covalently linked. In terms of processing, N-glycosylated. Expressed by the venom gland.

The protein localises to the secreted. Its function is as follows. Nerve growth factor is important for the development and maintenance of the sympathetic and sensory nervous systems. It stimulates division and differentiation of sympathetic and embryonic sensory neurons as well as basal forebrain cholinergic neurons in the brain. Its relevance in the snake venom is not clear. However, it has been shown to inhibit metalloproteinase-dependent proteolysis of platelet glycoprotein Ib alpha, suggesting a metalloproteinase inhibition to prevent metalloprotease autodigestion and/or protection against prey proteases. Binds a lipid between the two protein chains in the homodimer. The lipid-bound form promotes histamine relase from mouse mast cells, contrary to the lipid-free form. It promotes neurite outgrowth in rat PC12 pheochromocytoma cells. The chain is Venom nerve growth factor from Macrovipera lebetinus (Levantine viper).